The primary structure comprises 585 residues: Aspartate--tRNA ligase (585 aa).

L-aspartate is bound at residue Glu-171. The segment at 195-198 (QLFK) is aspartate. Arg-217 serves as a coordination point for L-aspartate. ATP-binding positions include 217-219 (RDE) and Gln-226. His-448 lines the L-aspartate pocket. Position 482 (Glu-482) interacts with ATP. Arg-489 contacts L-aspartate. An ATP-binding site is contributed by 534–537 (GLDR).

This sequence belongs to the class-II aminoacyl-tRNA synthetase family. Type 1 subfamily. Homodimer.

It is found in the cytoplasm. It catalyses the reaction tRNA(Asp) + L-aspartate + ATP = L-aspartyl-tRNA(Asp) + AMP + diphosphate. In terms of biological role, catalyzes the attachment of L-aspartate to tRNA(Asp) in a two-step reaction: L-aspartate is first activated by ATP to form Asp-AMP and then transferred to the acceptor end of tRNA(Asp). The chain is Aspartate--tRNA ligase from Histophilus somni (strain 129Pt) (Haemophilus somnus).